A 344-amino-acid chain; its full sequence is S-methyl-5'-thioadenosine phosphorylase (344 aa).

Residues T45, 88-89 (RH), and 121-122 (SA) contribute to the phosphate site. M238 contacts substrate. Phosphate is bound at residue S239. 262–264 (DYD) contacts substrate.

It belongs to the PNP/MTAP phosphorylase family. MTAP subfamily. Homotrimer.

The protein localises to the cytoplasm. Its subcellular location is the nucleus. The enzyme catalyses S-methyl-5'-thioadenosine + phosphate = 5-(methylsulfanyl)-alpha-D-ribose 1-phosphate + adenine. It functions in the pathway amino-acid biosynthesis; L-methionine biosynthesis via salvage pathway; S-methyl-5-thio-alpha-D-ribose 1-phosphate from S-methyl-5'-thioadenosine (phosphorylase route): step 1/1. Its function is as follows. Catalyzes the reversible phosphorylation of S-methyl-5'-thioadenosine (MTA) to adenine and 5-methylthioribose-1-phosphate. Involved in the breakdown of MTA, a major by-product of polyamine biosynthesis. Responsible for the first step in the methionine salvage pathway after MTA has been generated from S-adenosylmethionine. Has broad substrate specificity with 6-aminopurine nucleosides as preferred substrates. This Candida albicans (strain SC5314 / ATCC MYA-2876) (Yeast) protein is S-methyl-5'-thioadenosine phosphorylase.